Here is a 209-residue protein sequence, read N- to C-terminus: Large ribosomal subunit protein uL3 (209 aa).

Residues 125–148 are disordered; sequence RHGQSRGPMAHGSRYHRRPGSMGP.

The protein belongs to the universal ribosomal protein uL3 family. Part of the 50S ribosomal subunit. Forms a cluster with proteins L14 and L19.

Its function is as follows. One of the primary rRNA binding proteins, it binds directly near the 3'-end of the 23S rRNA, where it nucleates assembly of the 50S subunit. The protein is Large ribosomal subunit protein uL3 of Lysinibacillus sphaericus (strain C3-41).